The chain runs to 212 residues: MKLLYDLLPVILFFLAYKFYGALPPEWILAVGVWLPVALEPDNPGHAIYLATAVAMVVMAVQLALGLAIKRRLETMPLLTAAVILVLGGATLWLHDPVFILWKPTLVNWLFALVFMAPPLFGRRTLVETLMGHALSVPRAIWSRVNLAWVVFFLVSGLANLFVAYTFSEAVWVDFKLFGMLGMTFVFVIGQAVYLGLHHREDDPHTTKGDPS.

The next 6 membrane-spanning stretches (helical) occupy residues 19 to 39 (FYGA…PVAL), 47 to 67 (AIYL…ALGL), 82 to 102 (AVIL…FILW), 105 to 122 (TLVN…PLFG), 147 to 167 (LAWV…AYTF), and 177 to 197 (LFGM…YLGL).

This sequence belongs to the YciB family.

It localises to the cell inner membrane. In terms of biological role, plays a role in cell envelope biogenesis, maintenance of cell envelope integrity and membrane homeostasis. The protein is Inner membrane-spanning protein YciB of Thioalkalivibrio sulfidiphilus (strain HL-EbGR7).